We begin with the raw amino-acid sequence, 497 residues long: MQIVVGCMPALTLKTDCLMLGVWQDRTDTPLLKELDTALHGALGQSVDSKAFVGKEGETLLFQTGAGLPAARVLLIGLGAYAQADCGAMRRGAAEGARVLQQQRVKRAGLALSEAPAGLPLTQAVQVLVEGLLLASYRFDRFLTQKREDLPPLLETLDILIADQGSLEGVAAAVERARHIGHGVALARDLVNQPGNVKSPEFLAERARQLAGECGLSCTVLEQEQLEREGFGALLAVAQGSARPPRLIVLEYRGGAPDEKPLALVGKGVVFDSGGISLKPGEKMDEMKMDMAGAAAVFGAMSAAAGLRLPVNLVAIVPAVENLPSASAYRPGDIITSLSGRTIEVLNTDAEGRLILADALTYAGRFEPRAVIDLATLTGACIIALGHEASAVFSNRDELARNLIRAGETSRERLWQLPLWDSYDKQIKSEIADMKNTGGRPAGTITAAAFLQRFVPDCPWAHIDIAGTAWEAKGTALCPRGGTGVGVRLLIDLLEQE.

Mn(2+) contacts are provided by Lys-267 and Asp-272. Residue Lys-279 is part of the active site. The Mn(2+) site is built by Asp-290, Asp-349, and Glu-351. Residue Arg-353 is part of the active site.

The protein belongs to the peptidase M17 family. Mn(2+) serves as cofactor.

The protein localises to the cytoplasm. The catalysed reaction is Release of an N-terminal amino acid, Xaa-|-Yaa-, in which Xaa is preferably Leu, but may be other amino acids including Pro although not Arg or Lys, and Yaa may be Pro. Amino acid amides and methyl esters are also readily hydrolyzed, but rates on arylamides are exceedingly low.. The enzyme catalyses Release of an N-terminal amino acid, preferentially leucine, but not glutamic or aspartic acids.. Functionally, presumably involved in the processing and regular turnover of intracellular proteins. Catalyzes the removal of unsubstituted N-terminal amino acids from various peptides. The polypeptide is Probable cytosol aminopeptidase (Syntrophotalea carbinolica (strain DSM 2380 / NBRC 103641 / GraBd1) (Pelobacter carbinolicus)).